The chain runs to 548 residues: Inosine-5'-monophosphate dehydrogenase (548 aa).

2 consecutive CBS domains span residues 121–201 and 205–261; these read FILD…EDPV and MSTE…PLAS. Residues 298-300 and 348-350 contribute to the NAD(+) site; these read DSS and GMG. Residues glycine 350 and glycine 352 each contribute to the K(+) site. Serine 353 lines the IMP pocket. Cysteine 355 provides a ligand contact to K(+). Cysteine 355 serves as the catalytic Thioimidate intermediate. Residues 388–390 and 411–412 contribute to the IMP site; these read DGG and GS. The active-site Proton acceptor is arginine 461. Glutamine 473 lines the IMP pocket. Residues 527–548 form a disordered region; sequence ASAQTEGNVHGLHSHEKKLYSS. Serine 528 is a binding site for K(+). The segment covering 539–548 has biased composition (basic and acidic residues); the sequence is HSHEKKLYSS.

This sequence belongs to the IMPDH/GMPR family. As to quaternary structure, homotetramer. K(+) serves as cofactor.

It is found in the cytoplasm. The enzyme catalyses IMP + NAD(+) + H2O = XMP + NADH + H(+). It participates in purine metabolism; XMP biosynthesis via de novo pathway; XMP from IMP: step 1/1. Mycophenolic acid (MPA) is a non-competitive inhibitor that prevents formation of the closed enzyme conformation by binding to the same site as the amobile flap. In contrast, mizoribine monophosphate (MZP) is a competitive inhibitor that induces the closed conformation. MPA is a potent inhibitor of mammalian IMPDHs but a poor inhibitor of the bacterial enzymes. MZP is a more potent inhibitor of bacterial IMPDH. Catalyzes the conversion of inosine 5'-phosphate (IMP) to xanthosine 5'-phosphate (XMP), the first committed and rate-limiting step in the de novo synthesis of guanine nucleotides, and therefore plays an important role in the regulation of cell growth. Part of the gene cluster that mediates the biosynthesis of mycophenolic acid (MPA), the first isolated antibiotic natural product in the world. Does not play a role in the biosynthesis of MPA, but is involved in self resistance to MPA, since MPA acts as an inhibitor of IMP dehydrogenases. This is Inosine-5'-monophosphate dehydrogenase from Penicillium brevicompactum.